Here is a 372-residue protein sequence, read N- to C-terminus: GDP-mannose transporter GONST3 (372 aa).

The next 10 membrane-spanning stretches (helical) occupy residues 33–53 (ASVY…SIIN), 60–80 (FPYP…GVLL), 92–112 (LNLL…LSLF), 125–145 (TFIV…TLFL), 155–175 (WGSL…DYQF), 177–197 (IAAY…FVYI), 209–229 (WGLV…ELLI), 251–271 (VVLP…FGFS), 280–300 (GFTV…LMVW), and 303–323 (HSTF…VMYQ). Positions 331 to 372 (NATQEAKPQEQDEEQEKLLEMQENKESNSVDIKETLKSEEKL) are disordered. Residues 346–372 (EKLLEMQENKESNSVDIKETLKSEEKL) show a composition bias toward basic and acidic residues.

The protein belongs to the nucleotide-sugar transporter family. GDP-Mannose:GMP antiporter (GMA) (TC 2.A.7.13) subfamily. As to expression, expressed in rosette leaves, stems, flowers and siliques.

The protein resides in the golgi apparatus membrane. Its function is as follows. GDP-mannose transporter that may be involved in the import of GDP-mannose from the cytoplasm into the Golgi lumen. In Arabidopsis thaliana (Mouse-ear cress), this protein is GDP-mannose transporter GONST3.